The primary structure comprises 1453 residues: Collagen alpha-1(I) chain (1453 aa).

Residues 1–22 (MFSFVDLRLLLLLGATALLTHG) form the signal peptide. Positions 23–151 (QEDIPEVSCI…PPGLGGNFAS (129 aa)) are cleaved as a propeptide — N-terminal propeptide. The VWFC domain occupies 29 to 87 (VSCIHNGLRVPNGETWKPEVCLICICHNGTAVCDDVQCNEELDCPNPQRREGECCAFCP). The N-linked (GlcNAc...) asparagine glycan is linked to Asn56. The disordered stretch occupies residues 94-1210 (NSEDVGVEGP…GGRYYRADDA (1117 aa)). 2 stretches are compositionally biased toward pro residues: residues 109 to 118 (PQGPRGPVGP) and 128 to 143 (PGLP…PGPP). A nonhelical region (N-terminal) region spans residues 152 to 167 (QMSYGYDEKSAGVSVP). Allysine is present on Lys160. Phosphoserine is present on Ser161. Residues 168–1181 (GPMGPSGPRG…PGPPGPPGPP (1014 aa)) are triple-helical region. Pro179, Pro182, Pro185, Pro194, Pro197, Pro200, Pro215, Pro230, Pro236, Pro245, and Pro251 each carry 4-hydroxyproline. Gly residues predominate over residues 198–207 (GEPGGSGPMG). Residues 218-232 (NGDDGEAGKPGRPGE) show a composition bias toward basic and acidic residues. At Lys254 the chain carries 5-hydroxylysine; alternate. Lys254 is a glycosylation site (O-linked (Gal...) hydroxylysine; alternate). The residue at position 260 (Ser260) is a Phosphoserine. Low complexity predominate over residues 268–284 (DAGPAGPKGEPGSPGEN). Residues Pro278, Pro281, Pro287, Pro296, and Pro302 each carry the 4-hydroxyproline modification. Residues 307–320 (TAGARGNDGAVGAA) show a composition bias toward low complexity. Residues 322–334 (PPGPTGPTGPPGF) are compositionally biased toward pro residues. Pro323, Pro332, Pro335, Pro362, Pro365, Pro377, Pro383, Pro392, Pro398, Pro401, and Pro416 each carry 4-hydroxyproline. The span at 368–407 (AGAAGPAGNPGADGQPGAKGANGAPGIAGAPGFPGARGPS) shows a compositional bias: low complexity. The residue at position 419 (Lys419) is a 5-hydroxylysine. 4-hydroxyproline occurs at positions 425, 428, 440, 449, 464, 470, 479, and 485. Positions 474 to 483 (GERGGPGSRG) are enriched in gly residues. Lys494 carries the post-translational modification 5-hydroxylysine. Over residues 499-515 (ERGAPGPAGPKGSPGEA) the composition is skewed to low complexity. Pro503, Pro512, Pro518, Pro524, Pro533, Pro536, Pro545, Pro554, Pro560, Pro572, Pro581, Pro590, Pro593, Pro611, Pro629, Pro635, Pro641, Pro647, Pro653, Pro659, Pro671, Pro680, Pro692, Pro704, Pro707, Pro713, Pro719, and Pro728 each carry 4-hydroxyproline. Low complexity predominate over residues 527–566 (KGLTGSPGSPGPDGKTGPPGPAGQDGRPGPAGPPGARGQA). Residues 623 to 650 (QGPAGSPGFQGLPGPAGPPGEAGKPGEQ) are compositionally biased toward low complexity. Composition is skewed to low complexity over residues 685 to 695 (PRGNNGAPGND) and 703 to 716 (APGA…PGLQ). The short motif at 734 to 736 (RGD) is the Cell attachment site element. Lys740 bears the 5-hydroxylysine mark. A 4-hydroxyproline mark is found at Pro746, Pro761, and Pro767. Ser776 is modified (phosphoserine). 4-hydroxyproline occurs at positions 788, 797, 806, 812, 830, 839, and 848. The span at 800-815 (AGFAGPPGADGQPGAK) shows a compositional bias: low complexity. The segment covering 829-841 (PPGPAGPAGPPGP) has biased composition (pro residues). Residues 842–872 (IGNVGAPGPKGPRGAAGPPGATGFPGAAGRV) are compositionally biased toward low complexity. Lys851 carries the post-translational modification 5-hydroxylysine. Pro860 and Pro866 each carry 4-hydroxyproline. Position 874 is a 3-hydroxyproline (Pro874). A 4-hydroxyproline mark is found at Pro875, Pro884, Pro887, Pro908, Pro917, Pro926, Pro935, Pro953, Pro962, Pro965, Pro971, Pro986, Pro992, Pro998, Pro1007, and Pro1013. A compositionally biased stretch (low complexity) spans 901–910 (ETGPAGRPGE). Residues 920-935 (AGEKGSPGADGPAGSP) show a composition bias toward low complexity. The segment covering 985–995 (PPGPMGPPGLA) has biased composition (pro residues). Low complexity predominate over residues 997–1012 (PPGESGREGSPGAEGS). Lys1022 is subject to 5-hydroxylysine. The segment covering 1031-1046 (AGPPGAPGAPGAPGPV) has biased composition (pro residues). 4-hydroxyproline is present on residues Pro1034, Pro1037, and Pro1040. Residues 1067-1081 (IGPAGARGPAGPQGP) are compositionally biased toward low complexity. Residues 1082–1084 (RGD) carry the Cell attachment site motif. The span at 1082-1096 (RGDKGETGEQGDRGI) shows a compositional bias: basic and acidic residues. Lys1085 carries the post-translational modification 5-hydroxylysine. A 5-hydroxylysine; alternate modification is found at Lys1097. Lys1097 is a glycosylation site (O-linked (Gal...) hydroxylysine; alternate). The segment covering 1102–1148 (FSGLQGPPGSPGSPGEQGPSGASGPAGPRGPPGSAGSPGKDGLNGLP) has biased composition (low complexity). Pro1109, Pro1112, Pro1115, Pro1133, and Pro1148 each carry 4-hydroxyproline. Pro1153 carries the 3-hydroxyproline modification. Pro1154 carries the 4-hydroxyproline modification. A compositionally biased stretch (pro residues) spans 1166–1181 (AGPPGPPGPPGPPGPP). The residue at position 1168 (Pro1168) is a 3-hydroxyproline. Pro1169 carries the 4-hydroxyproline modification. Pro1171 bears the 3-hydroxyproline mark. Position 1172 is a 4-hydroxyproline (Pro1172). Pro1174 is subject to 3-hydroxyproline. 4-hydroxyproline occurs at positions 1175, 1178, and 1181. The tract at residues 1182–1207 (SGGYDFSFLPQPPQEKSQDGGRYYRA) is nonhelical region (C-terminal). Lys1197 carries the post-translational modification Allysine. Basic and acidic residues predominate over residues 1197–1210 (KSQDGGRYYRADDA). A propeptide spans 1208–1453 (DDANVVRDRD…GLDIGPACFV (246 aa)) (C-terminal propeptide). Positions 1218-1453 (LEVDTTLKSL…GLDIGPACFV (236 aa)) constitute a Fibrillar collagen NC1 domain. 3 cysteine pairs are disulfide-bonded: Cys1248/Cys1280, Cys1288/Cys1451, and Cys1359/Cys1404. Residues Asp1266, Asn1268, Gln1269, Cys1271, and Asp1274 each contribute to the Ca(2+) site. N-linked (GlcNAc...) asparagine glycosylation occurs at Asn1354.

This sequence belongs to the fibrillar collagen family. In terms of assembly, trimers of one alpha 2(I) and two alpha 1(I) chains. Interacts with MRC2. Interacts with TRAM2. Interacts with MFAP4 in a Ca (2+)-dependent manner. Contains mostly 4-hydroxyproline. Proline residues at the third position of the tripeptide repeating unit (G-X-Y) are hydroxylated in some or all of the chains. Post-translationally, contains 3-hydroxyproline at a few sites. This modification occurs on the first proline residue in the sequence motif Gly-Pro-Hyp, where Hyp is 4-hydroxyproline. In terms of processing, lysine residues at the third position of the tripeptide repeating unit (G-X-Y) are 5-hydroxylated in some or all of the chains. O-glycosylated on hydroxylated lysine residues. The O-linked glycan consists of a Glc-Gal disaccharide. As to expression, forms the fibrils of tendon, ligaments and bones. In bones the fibrils are mineralized with calcium hydroxyapatite.

It localises to the secreted. It is found in the extracellular space. The protein resides in the extracellular matrix. Type I collagen is a member of group I collagen (fibrillar forming collagen). The sequence is that of Collagen alpha-1(I) chain from Mus musculus (Mouse).